We begin with the raw amino-acid sequence, 348 residues long: Haptoglobin-related protein (348 aa).

A signal peptide (not cleaved) is located at residues 1–18 (MSDLGAVISLLLWGRQLF). Residues 34–87 (FPKPPEIANGYVEHLFRYQCKNYYRLRTEGDGVYTLNDKKQWINKAVGDKLPEC) form the Sushi domain. The Peptidase S1 domain maps to 104 to 346 (ILGGHLDAKG…IQHWVQKTIA (243 aa)). Intrachain disulfides connect Cys251–Cys282 and Cys293–Cys323.

This sequence belongs to the peptidase S1 family. In terms of tissue distribution, in adult liver the amount of HPR mRNA is at the lower limit of detection, therefore the extent of its expression is at most less than 1000-fold that of the HP1F gene. No HPR mRNA can be detected in fetal liver. Expressed in Hep-G2 and leukemia MOLT-4 cell lines.

The protein resides in the secreted. Functionally, primate-specific plasma protein associated with apolipoprotein L-I (apoL-I)-containing high-density lipoprotein (HDL). This HDL particle, termed trypanosome lytic factor-1 (TLF-1), mediates human innate immune protection against many species of African trypanosomes. Binds hemoglobin with high affinity and may contribute to the clearance of cell-free hemoglobin to allow hepatic recycling of heme iron. The chain is Haptoglobin-related protein (HPR) from Homo sapiens (Human).